A 264-amino-acid chain; its full sequence is MICOS complex subunit MIC27 (264 aa).

The N-terminal 27 residues, 1–27 (MAALRMGKLTTMPTGLIYASISVHVAK), are a transit peptide targeting the mitochondrion. The Mitochondrial intermembrane segment spans residues 28 to 110 (EEESKKQLVK…YVYLKNPPRD (83 aa)). A helical membrane pass occupies residues 111–129 (FLPKIGVITVSGLAGFISA). At 130–137 (RKGSRFKR) the chain is on the mitochondrial matrix side. The helical transmembrane segment at 138 to 155 (IAYPLGLATLGATVCYPV) threads the bilayer. At 156 to 264 (QSVIIAKVAG…EDIDMYSTRS (109 aa)) the chain is on the mitochondrial intermembrane side. The span at 189–198 (KLPEHKEKTK) shows a compositional bias: basic and acidic residues. The tract at residues 189–264 (KLPEHKEKTK…EDIDMYSTRS (76 aa)) is disordered. Residues 223–238 (AELSSETKTKSTSGAT) show a composition bias toward low complexity. Positions 245–256 (KLMDHGQSHPED) are enriched in basic and acidic residues.

This sequence belongs to the apolipoprotein O/MICOS complex subunit Mic27 family. As to quaternary structure, component of the mitochondrial contact site and cristae organizing system (MICOS) complex, composed of at least MICOS10/MIC10, CHCHD3/MIC19, CHCHD6/MIC25, APOOL/MIC27, IMMT/MIC60, APOO/MIC23/MIC26 and QIL1/MIC13. This complex was also known under the names MINOS or MitOS complex. The MICOS complex associates with mitochondrial outer membrane proteins SAMM50, MTX1 and MTX2 (together described as components of the mitochondrial outer membrane sorting assembly machinery (SAM) complex) and DNAJC11, mitochondrial inner membrane protein TMEM11 and with HSPA9. The MICOS and SAM complexes together with DNAJC11 are part of a large protein complex spanning both membranes termed the mitochondrial intermembrane space bridging (MIB) complex. Interacts with MICOS10/MIC10, IMMT/MIC60 and APOO/MIC23/MIC26.

Its subcellular location is the mitochondrion inner membrane. It localises to the mitochondrion. Component of the MICOS complex, a large protein complex of the mitochondrial inner membrane that plays crucial roles in the maintenance of crista junctions, inner membrane architecture, and formation of contact sites to the outer membrane. Specifically binds to cardiolipin (in vitro) but not to the precursor lipid phosphatidylglycerol. Plays a crucial role in crista junction formation and mitochondrial function. This chain is MICOS complex subunit MIC27 (APOL), found in Bos taurus (Bovine).